A 337-amino-acid polypeptide reads, in one-letter code: Holliday junction branch migration complex subunit RuvB (337 aa).

Residues 1 to 180 (MTRLISADKS…FGVISRLEFY (180 aa)) are large ATPase domain (RuvB-L). ATP-binding positions include leucine 19, arginine 20, glycine 61, lysine 64, threonine 65, threonine 66, 127 to 129 (EDF), arginine 170, tyrosine 180, and arginine 217. Mg(2+) is bound at residue threonine 65. The interval 181 to 251 (THEELAFIIT…VADQALALLE (71 aa)) is small ATPAse domain (RuvB-S). The segment at 254 to 337 (DMGFDMMDRA…APEPPQGKLF (84 aa)) is head domain (RuvB-H). Residues arginine 309 and arginine 314 each contribute to the DNA site.

The protein belongs to the RuvB family. As to quaternary structure, homohexamer. Forms an RuvA(8)-RuvB(12)-Holliday junction (HJ) complex. HJ DNA is sandwiched between 2 RuvA tetramers; dsDNA enters through RuvA and exits via RuvB. An RuvB hexamer assembles on each DNA strand where it exits the tetramer. Each RuvB hexamer is contacted by two RuvA subunits (via domain III) on 2 adjacent RuvB subunits; this complex drives branch migration. In the full resolvosome a probable DNA-RuvA(4)-RuvB(12)-RuvC(2) complex forms which resolves the HJ.

The protein resides in the cytoplasm. It catalyses the reaction ATP + H2O = ADP + phosphate + H(+). Functionally, the RuvA-RuvB-RuvC complex processes Holliday junction (HJ) DNA during genetic recombination and DNA repair, while the RuvA-RuvB complex plays an important role in the rescue of blocked DNA replication forks via replication fork reversal (RFR). RuvA specifically binds to HJ cruciform DNA, conferring on it an open structure. The RuvB hexamer acts as an ATP-dependent pump, pulling dsDNA into and through the RuvAB complex. RuvB forms 2 homohexamers on either side of HJ DNA bound by 1 or 2 RuvA tetramers; 4 subunits per hexamer contact DNA at a time. Coordinated motions by a converter formed by DNA-disengaged RuvB subunits stimulates ATP hydrolysis and nucleotide exchange. Immobilization of the converter enables RuvB to convert the ATP-contained energy into a lever motion, pulling 2 nucleotides of DNA out of the RuvA tetramer per ATP hydrolyzed, thus driving DNA branch migration. The RuvB motors rotate together with the DNA substrate, which together with the progressing nucleotide cycle form the mechanistic basis for DNA recombination by continuous HJ branch migration. Branch migration allows RuvC to scan DNA until it finds its consensus sequence, where it cleaves and resolves cruciform DNA. This Citrifermentans bemidjiense (strain ATCC BAA-1014 / DSM 16622 / JCM 12645 / Bem) (Geobacter bemidjiensis) protein is Holliday junction branch migration complex subunit RuvB.